Reading from the N-terminus, the 1244-residue chain is Actin cytoskeleton-regulatory complex protein SLA1 (1244 aa).

SH3 domains are found at residues 3-68 (VFLG…IEEA) and 69-132 (PVLK…PENG). Disordered stretches follow at residues 128–248 (EPEN…GNHE) and 415–497 (DKKH…PKKS). Residues 140–159 (APAAAEAPAATPAAAPASAA) show a composition bias toward low complexity. A compositionally biased stretch (basic and acidic residues) spans 171-184 (HNDRARMMQSKEDQ). Low complexity predominate over residues 199–214 (ARPTATTETTDATAAA). A compositionally biased stretch (acidic residues) spans 226–235 (NDNDDEEDDY). In terms of domain architecture, SH3 3 spans 353-415 (KSKKRGIVQY…PAQFIEPVRD (63 aa)). Positions 429 to 447 (SIKKNFTKSPSRSRSRSRS) are enriched in basic residues. A phosphoserine mark is found at Ser-447, Ser-449, and Ser-454. Residues Lys-471 and Lys-548 each participate in a glycyl lysine isopeptide (Lys-Gly) (interchain with G-Cter in ubiquitin) cross-link. Residues 471-484 (KRSRKSSLSSHKKN) show a composition bias toward basic residues. 3 disordered regions span residues 558–592 (KANDGSSSRGTDSRDSERERRRRLKEQEEKERDRR), 610–649 (EERSRLQEKELPPIKPPRPTSTTSVPNTTSVPPAESSNNN), and 726–791 (PTNA…NLLS). 2 stretches are compositionally biased toward basic and acidic residues: residues 568-592 (TDSRDSERERRRRLKEQEEKERDRR) and 610-621 (EERSRLQEKELP). Low complexity predominate over residues 629-649 (TSTTSVPNTTSVPPAESSNNN). The segment covering 726–756 (PTNATGNMFSQPDGSLNVATSPETSLPQQLL) has biased composition (polar residues). Over residues 757–771 (PQTTSPAQTAPSTSA) the composition is skewed to low complexity. Ser-799 carries the post-translational modification Phosphoserine. The interval 813 to 853 (KAAASTPEPNLKDLEPVKTGGTTVPAAPVSSAPVSSAPAPL) is disordered. Phosphothreonine is present on Thr-831. The segment covering 836–851 (VPAAPVSSAPVSSAPA) has biased composition (low complexity). Thr-858 is modified (phosphothreonine). Tandem repeats lie at residues 868-874 (TGFVMMP), 877-883 (TGGDMLP), and 887-893 (TGGFVVP). Residues 868–1205 (TGFVMMPMIT…NTFNTGGAMQ (338 aa)) are 16 X 7 AA approximate repeats of T-G-G-A-M-M-P. A phosphothreonine mark is found at Thr-887 and Thr-904. 2 consecutive repeat copies span residues 923–929 (TGGAMMP) and 945–951 (TGGGLIP). Phosphothreonine is present on residues Thr-984 and Thr-993. Phosphoserine is present on Ser-996. 5 repeat units span residues 1003-1009 (TGGTMIP), 1020-1026 (TGGAMMT), 1031-1037 (TGSAMMP), 1048-1054 (TGGAMMP), and 1065-1071 (TGGAMMP). Thr-1075 is subject to Phosphothreonine. A run of 6 repeats spans residues 1084-1090 (TGGAMIP), 1129-1135 (TGGAMNT), 1155-1161 (TGGVMQE), 1170-1176 (TGGAMQQ), 1185-1191 (TDGIMQQ), and 1200-1206 (TGGAMQQ).

The protein belongs to the SLA1 family. In terms of assembly, component of the PAN1 actin cytoskeleton-regulatory complex. Interacts with ABP1, KRE6, LAS17, LSB5, RSP5, RVS167, VPS1 and YSC84. In terms of processing, phosphorylated by PRK1.

The protein localises to the nucleus. It localises to the cell membrane. It is found in the endosome membrane. The protein resides in the cytoplasm. Its subcellular location is the cytoskeleton. The protein localises to the actin patch. In terms of biological role, component of the PAN1 actin cytoskeleton-regulatory complex required for the internalization of endosomes during actin-coupled endocytosis. The complex links the site of endocytosis to the cell membrane-associated actin cytoskeleton. Mediates uptake of external molecules and vacuolar degradation of plasma membrane proteins. Plays a role in the proper organization of the cell membrane-associated actin cytoskeleton and promotes its destabilization. The sequence is that of Actin cytoskeleton-regulatory complex protein SLA1 (SLA1) from Saccharomyces cerevisiae (strain ATCC 204508 / S288c) (Baker's yeast).